Reading from the N-terminus, the 355-residue chain is DNA polymerase IV (355 aa).

In terms of domain architecture, UmuC spans Ile-4–Gly-185. Mg(2+) is bound by residues Asp-8 and Asp-103. Glu-104 is a catalytic residue.

This sequence belongs to the DNA polymerase type-Y family. In terms of assembly, monomer. It depends on Mg(2+) as a cofactor.

It localises to the cytoplasm. It carries out the reaction DNA(n) + a 2'-deoxyribonucleoside 5'-triphosphate = DNA(n+1) + diphosphate. Functionally, poorly processive, error-prone DNA polymerase involved in untargeted mutagenesis. Copies undamaged DNA at stalled replication forks, which arise in vivo from mismatched or misaligned primer ends. These misaligned primers can be extended by PolIV. Exhibits no 3'-5' exonuclease (proofreading) activity. May be involved in translesional synthesis, in conjunction with the beta clamp from PolIII. This chain is DNA polymerase IV, found in Pasteurella multocida (strain Pm70).